A 262-amino-acid chain; its full sequence is Global transcriptional regulator CodY (262 aa).

A GAF domain region spans residues 1–159 (MAHLLEKTRK…SSTVVGIQLL (159 aa)). Residues 207-226 (ASVIADRIGITRSVIVNALR) constitute a DNA-binding region (H-T-H motif).

It belongs to the CodY family.

The protein localises to the cytoplasm. In terms of biological role, DNA-binding global transcriptional regulator which is involved in the adaptive response to starvation and acts by directly or indirectly controlling the expression of numerous genes in response to nutrient availability. During rapid exponential growth, CodY is highly active and represses genes whose products allow adaptation to nutrient depletion. This chain is Global transcriptional regulator CodY, found in Streptococcus gordonii (strain Challis / ATCC 35105 / BCRC 15272 / CH1 / DL1 / V288).